Reading from the N-terminus, the 355-residue chain is DNA polymerase IV (355 aa).

A UmuC domain is found at 7 to 188; sequence IIHIDMDCFY…LPVRKLFGVG (182 aa). Asp-11 and Asp-106 together coordinate Mg(2+). Glu-107 is a catalytic residue.

The protein belongs to the DNA polymerase type-Y family. As to quaternary structure, monomer. The cofactor is Mg(2+).

It is found in the cytoplasm. It carries out the reaction DNA(n) + a 2'-deoxyribonucleoside 5'-triphosphate = DNA(n+1) + diphosphate. Its function is as follows. Poorly processive, error-prone DNA polymerase involved in untargeted mutagenesis. Copies undamaged DNA at stalled replication forks, which arise in vivo from mismatched or misaligned primer ends. These misaligned primers can be extended by PolIV. Exhibits no 3'-5' exonuclease (proofreading) activity. May be involved in translesional synthesis, in conjunction with the beta clamp from PolIII. The protein is DNA polymerase IV of Legionella pneumophila subsp. pneumophila (strain Philadelphia 1 / ATCC 33152 / DSM 7513).